We begin with the raw amino-acid sequence, 132 residues long: Small ribosomal subunit protein uS8 (132 aa).

Belongs to the universal ribosomal protein uS8 family. As to quaternary structure, part of the 30S ribosomal subunit. Contacts proteins S5 and S12.

Functionally, one of the primary rRNA binding proteins, it binds directly to 16S rRNA central domain where it helps coordinate assembly of the platform of the 30S subunit. The polypeptide is Small ribosomal subunit protein uS8 (Anaeromyxobacter dehalogenans (strain 2CP-1 / ATCC BAA-258)).